The following is a 203-amino-acid chain: FMN-dependent NADH:quinone oxidoreductase (203 aa).

Residues serine 9 and 15–17 (SKS) contribute to the FMN site.

Belongs to the azoreductase type 1 family. In terms of assembly, homodimer. The cofactor is FMN.

The enzyme catalyses 2 a quinone + NADH + H(+) = 2 a 1,4-benzosemiquinone + NAD(+). It catalyses the reaction N,N-dimethyl-1,4-phenylenediamine + anthranilate + 2 NAD(+) = 2-(4-dimethylaminophenyl)diazenylbenzoate + 2 NADH + 2 H(+). Quinone reductase that provides resistance to thiol-specific stress caused by electrophilic quinones. Functionally, also exhibits azoreductase activity. Catalyzes the reductive cleavage of the azo bond in aromatic azo compounds to the corresponding amines. The polypeptide is FMN-dependent NADH:quinone oxidoreductase (Bordetella avium (strain 197N)).